We begin with the raw amino-acid sequence, 360 residues long: Protein phosphatase 1L (360 aa).

Over 1–25 (MIEDTMTLLSLLGRIMRYFLLRPET) the chain is Extracellular. A helical transmembrane segment spans residues 26-42 (LFLLCISLALWSYFFHT). Residues 43–360 (DEVKTIVKSS…FRNSSKTEEH (318 aa)) are Cytoplasmic-facing. One can recognise a PPM-type phosphatase domain in the interval 92 to 351 (NVAVYSIQGR…DNITVMVVKF (260 aa)). Mn(2+) is bound by residues D128, G129, D302, and D342.

This sequence belongs to the PP2C family. As to quaternary structure, interacts with MAP3K7/TAK1 and MAP3K5. The cofactor is Mg(2+). Requires Mn(2+) as cofactor. As to expression, expressed in brain, heart, testis, liver, lung and skeletal muscle.

It is found in the membrane. The enzyme catalyses O-phospho-L-seryl-[protein] + H2O = L-seryl-[protein] + phosphate. The catalysed reaction is O-phospho-L-threonyl-[protein] + H2O = L-threonyl-[protein] + phosphate. Functionally, acts as a suppressor of the SAPK signaling pathways by associating with and dephosphorylating MAP3K7/TAK1 and MAP3K5, and by attenuating the association between MAP3K7/TAK1 and MAP2K4 or MAP2K6. This chain is Protein phosphatase 1L (Ppm1l), found in Mus musculus (Mouse).